Consider the following 81-residue polypeptide: MDPTIAAGALIGGGLIMAGGAIGAGIGDGIAGNALISGVARQPEAQGRLFTPFFITVGLVEAAYFINLAFMALFVFATPVK.

2 consecutive transmembrane segments (helical) span residues 5–25 (IAAGALIGGGLIMAGGAIGAG) and 57–77 (VGLVEAAYFINLAFMALFVFA).

Belongs to the ATPase C chain family. In terms of assembly, F-type ATPases have 2 components, F(1) - the catalytic core - and F(0) - the membrane proton channel. F(1) has five subunits: alpha(3), beta(3), gamma(1), delta(1), epsilon(1). F(0) has three main subunits: a(1), b(2) and c(10-14). The alpha and beta chains form an alternating ring which encloses part of the gamma chain. F(1) is attached to F(0) by a central stalk formed by the gamma and epsilon chains, while a peripheral stalk is formed by the delta and b chains.

It localises to the cell membrane. Its function is as follows. F(1)F(0) ATP synthase produces ATP from ADP in the presence of a proton or sodium gradient. F-type ATPases consist of two structural domains, F(1) containing the extramembraneous catalytic core and F(0) containing the membrane proton channel, linked together by a central stalk and a peripheral stalk. During catalysis, ATP synthesis in the catalytic domain of F(1) is coupled via a rotary mechanism of the central stalk subunits to proton translocation. Functionally, key component of the F(0) channel; it plays a direct role in translocation across the membrane. A homomeric c-ring of between 10-14 subunits forms the central stalk rotor element with the F(1) delta and epsilon subunits. The protein is ATP synthase subunit c of Mycobacterium marinum (strain ATCC BAA-535 / M).